The primary structure comprises 123 residues: Modulator protein MzrA (123 aa).

The Cytoplasmic segment spans residues methionine 1–glutamine 8. Residues tyrosine 9–valine 29 form a helical membrane-spanning segment. Topologically, residues arginine 30–glycine 123 are periplasmic.

Belongs to the MzrA family. In terms of assembly, interacts with EnvZ.

Its subcellular location is the cell inner membrane. Functionally, modulates the activity of the EnvZ/OmpR two-component regulatory system, probably by directly modulating EnvZ enzymatic activity and increasing stability of phosphorylated OmpR. In Serratia proteamaculans (strain 568), this protein is Modulator protein MzrA.